Reading from the N-terminus, the 181-residue chain is Adenylate kinase (181 aa).

Gly-10 to Thr-15 lines the ATP pocket. The tract at residues Ser-30–Val-59 is NMP. Residues Thr-31, Arg-36, Asp-57–Val-59, Gly-85–Arg-88, and Gln-92 each bind AMP. Residues Gly-126–Asp-132 form an LID region. Arg-127 serves as a coordination point for ATP. Arg-129 and Arg-140 together coordinate AMP. Gly-166 contacts ATP.

This sequence belongs to the adenylate kinase family. Monomer.

Its subcellular location is the cytoplasm. The enzyme catalyses AMP + ATP = 2 ADP. Its pathway is purine metabolism; AMP biosynthesis via salvage pathway; AMP from ADP: step 1/1. In terms of biological role, catalyzes the reversible transfer of the terminal phosphate group between ATP and AMP. Plays an important role in cellular energy homeostasis and in adenine nucleotide metabolism. This Mycobacteroides abscessus (strain ATCC 19977 / DSM 44196 / CCUG 20993 / CIP 104536 / JCM 13569 / NCTC 13031 / TMC 1543 / L948) (Mycobacterium abscessus) protein is Adenylate kinase.